Here is a 660-residue protein sequence, read N- to C-terminus: MGRIRILPDQVANKIAAGEVVERPASVVKELLENSLDAGATEVRVEVEAGGRRLIRIVDDGFGMLRDDALLAFERHATSKLRDVKDLLSIATLGFRGEALPSIASVSRLLLETRSMEEPTGTRIEIAGGKMLRCEEAALGGGTVITVRDLFYNVPARRKFLRTEPTELAHIASLVTHYSLAHPDKSFRLSTGPTELLGVTPVASMKERVYQVFGSQILDELVEIGVRERDLFLPPPSVPPSQAIAEYRSTEPEDPPFRRFRLTGFFSRPQIQKSNRNSIYIFVNGRLIRDRLVLHALSSAYHNLMPASAYPFALLFLECDAEEVDVNVHPSKTEVRFRHGSFLHDFIRDSIRERLMESRPAPTFSPVPMAAPPAQQGAQLPYSEFSQMLENEQQAASEMAEPAIAGEPAMPEFNLRATAPPTPRLDFSAPPIEVAPGPPPSGKLSRRLDMHGEFPLEAIPAPEMSLSALSDLRPLGQIHESFIIAAGRDGLWIIDQHVAHERILFEQVLKQRAAGRVETQRLLMPMILQLSAEQQIDYARIADELHASGFETEPFGNRTIAVKAAPAAVGPQDLERILFEILEIAENEMRTNSLDDLRRNICASIACRAAIKINMRLDLAKMEWLLRALAATDCPMSCPHGRPIAMHYSTREILKAFHRI.

The protein belongs to the DNA mismatch repair MutL/HexB family.

This protein is involved in the repair of mismatches in DNA. It is required for dam-dependent methyl-directed DNA mismatch repair. May act as a 'molecular matchmaker', a protein that promotes the formation of a stable complex between two or more DNA-binding proteins in an ATP-dependent manner without itself being part of a final effector complex. The polypeptide is DNA mismatch repair protein MutL (Solibacter usitatus (strain Ellin6076)).